A 316-amino-acid chain; its full sequence is Ornithine carbamoyltransferase (316 aa).

Residues 57 to 60, Q84, R108, and 135 to 138 each bind carbamoyl phosphate; these read STRT and HPCQ. L-ornithine-binding positions include N166, D230, and 234–235; that span reads SM. Carbamoyl phosphate is bound by residues 269–270 and R297; that span reads CL.

The protein belongs to the aspartate/ornithine carbamoyltransferase superfamily. OTCase family.

The protein resides in the cytoplasm. It catalyses the reaction carbamoyl phosphate + L-ornithine = L-citrulline + phosphate + H(+). It participates in amino-acid degradation; L-arginine degradation via ADI pathway; carbamoyl phosphate from L-arginine: step 2/2. In terms of biological role, reversibly catalyzes the transfer of the carbamoyl group from carbamoyl phosphate (CP) to the N(epsilon) atom of ornithine (ORN) to produce L-citrulline. In Bacillus cereus (strain AH187), this protein is Ornithine carbamoyltransferase.